Reading from the N-terminus, the 359-residue chain is Olfactory receptor 8S1 (359 aa).

The Extracellular portion of the chain corresponds to 1–25; it reads MALGNHSTITEFLLLGLSADPNIRA. Asn-5 carries an N-linked (GlcNAc...) asparagine glycan. Residues 26–46 traverse the membrane as a helical segment; sequence LLFVLFLGIYLLTIMENLMLL. Residues 47–54 are Cytoplasmic-facing; the sequence is LMIRADSC. A helical membrane pass occupies residues 55 to 75; that stretch reads LHKPMYFFLSHLSFVDLCFSS. Topologically, residues 76 to 99 are extracellular; the sequence is VIVPKMLENLLSQRKTISVEGCLA. A disulfide bridge links Cys-97 with Cys-189. Residues 100 to 120 traverse the membrane as a helical segment; sequence QVFFVFVTAGTEACLLSGMAY. The Cytoplasmic segment spans residues 121–139; sequence DRHAAICRPLLYGQIMGKQ. A helical transmembrane segment spans residues 140-160; sequence LYMHLVWGSWGLGFLDALINV. The Extracellular segment spans residues 161-197; the sequence is LLAVNMVFCEAKIIHHYSYEMPSLLPLSCSDISRSLI. Residues 198–217 form a helical membrane-spanning segment; it reads ALLCSTLLHGLGNFLLVFLS. Topologically, residues 218 to 237 are cytoplasmic; the sequence is YTRIISTILSISSTSGRSKA. A helical membrane pass occupies residues 238–258; it reads FSTCSAHLTAVTLYYGSGLLR. Topologically, residues 259–269 are extracellular; sequence HLMPNSGSPIE. The chain crosses the membrane as a helical span at residues 270–290; the sequence is LIFSVQYTVVTPMLNSLIYSL. Residues 291–359 are Cytoplasmic-facing; the sequence is KNKEVKGERS…ALRAAPTALP (69 aa). Positions 301 to 338 are disordered; that stretch reads LRDSSHLPQLHKGQARWKRPAFTEGRREPGHPELSIPV.

This sequence belongs to the G-protein coupled receptor 1 family.

Its subcellular location is the cell membrane. Functionally, odorant receptor. The polypeptide is Olfactory receptor 8S1 (OR8S1) (Homo sapiens (Human)).